The following is a 1330-amino-acid chain: Fanconi anemia group I protein homolog (1330 aa).

Lys522 is covalently cross-linked (Glycyl lysine isopeptide (Lys-Gly) (interchain with G-Cter in ubiquitin)). At Ser555 the chain carries Phosphoserine. Thr558 bears the Phosphothreonine mark. Position 729 is a phosphoserine (Ser729). Thr948 carries the post-translational modification Phosphothreonine. Phosphoserine is present on Ser1122. A disordered region spans residues Glu1299–Ser1330. Residues Ala1321–Ser1330 show a composition bias toward basic residues.

The protein belongs to the Fanconi anemia group I protein family. In terms of assembly, homodimer. Part of a FANCI-FANCD2 heterodimeric complex that binds and scans dsDNA for DNA damage. Interacts with FANCL. Interacts with MTMR15/FAN1. Interacts with POLN. Interacts with UBL5; the interaction promotes FANCI homodimerization. Post-translationally, monoubiquitinated by FANCL on Lys-522 during S phase and upon genotoxic stress. Deubiquitinated by USP1 as cells enter G2/M, or once DNA repair is completed. Monoubiquitination requires the FANCA-FANCB-FANCC-FANCE-FANCF-FANCG-FANCM complex. Ubiquitination is required for binding to chromatin, DNA repair, and normal cell cycle progression. Monoubiquitination is stimulated by DNA-binding. In terms of processing, phosphorylated in response to DNA damage by ATM and/or ATR. Phosphorylation of FANCI promotes ubiquitination of FANCD2, which prevents DNA release from the FANCI-FANCD2 complex.

It localises to the nucleus. The protein resides in the cytoplasm. Functionally, plays an essential role in the repair of DNA double-strand breaks by homologous recombination and in the repair of interstrand DNA cross-links (ICLs) by promoting FANCD2 monoubiquitination by FANCL and participating in recruitment to DNA repair sites. The FANCI-FANCD2 complex binds and scans double-stranded DNA (dsDNA) for DNA damage; this complex stalls at DNA junctions between double-stranded DNA and single-stranded DNA. Participates in S phase and G2 phase checkpoint activation upon DNA damage. The polypeptide is Fanconi anemia group I protein homolog (Fanci) (Mus musculus (Mouse)).